A 147-amino-acid chain; its full sequence is Microsomal glutathione S-transferase 2 (147 aa).

The next 3 helical transmembrane spans lie at 6–26 (SLLAAVSLLSACQQSYFAWRV), 62–82 (VFIVMLWMAGWYFNQVFAACL), and 107–127 (GFRLSLGILTLLPVLAVLGVA).

As to quaternary structure, homotrimer.

It is found in the endoplasmic reticulum membrane. The protein localises to the microsome membrane. The enzyme catalyses RX + glutathione = an S-substituted glutathione + a halide anion + H(+). It catalyses the reaction 1-chloro-2,4-dinitrobenzene + glutathione = 2,4-dinitrophenyl-S-glutathione + chloride + H(+). It carries out the reaction leukotriene C4 = leukotriene A4 + glutathione. The catalysed reaction is (5S)-hydroperoxy-(6E,8Z,11Z,14Z)-eicosatetraenoate + 2 glutathione = (5S)-hydroxy-(6E,8Z,11Z,14Z)-eicosatetraenoate + glutathione disulfide + H2O. Each monomer binds on GSH molecule but only one subunit is catalytically active. Catalyzes several different glutathione-dependent reactions. Catalyzes the glutathione-dependent reduction of lipid hydroperoxides, such as 5-HPETE. Has glutathione transferase activity, toward xenobiotic electrophiles, such as 1-chloro-2, 4-dinitrobenzene (CDNB). Also catalyzes the conjugation of leukotriene A4 with reduced glutathione to form leukotriene C4 (LTC4). Involved in oxidative DNA damage induced by ER stress and anticancer agents by activating LTC4 biosynthetic machinery in nonimmune cells. The chain is Microsomal glutathione S-transferase 2 from Mus musculus (Mouse).